Reading from the N-terminus, the 513-residue chain is Glutamyl-tRNA(Gln) amidotransferase subunit B, mitochondrial (513 aa).

Belongs to the GatB/GatE family. GatB subfamily. Subunit of the heterotrimeric GatFAB amidotransferase (AdT) complex, composed of A, B and F subunits.

It localises to the mitochondrion. It carries out the reaction L-glutamyl-tRNA(Gln) + L-glutamine + ATP + H2O = L-glutaminyl-tRNA(Gln) + L-glutamate + ADP + phosphate + H(+). In terms of biological role, allows the formation of correctly charged Gln-tRNA(Gln) through the transamidation of misacylated Glu-tRNA(Gln) in the mitochondria. The reaction takes place in the presence of glutamine and ATP through an activated gamma-phospho-Glu-tRNA(Gln). The protein is Glutamyl-tRNA(Gln) amidotransferase subunit B, mitochondrial of Debaryomyces hansenii (strain ATCC 36239 / CBS 767 / BCRC 21394 / JCM 1990 / NBRC 0083 / IGC 2968) (Yeast).